Here is a 450-residue protein sequence, read N- to C-terminus: uncharacterized protein (450 aa).

The next 12 helical transmembrane spans lie at 10 to 30 (IIVL…LVIA), 53 to 73 (LGGG…AIAI), 95 to 115 (TAGN…LFAI), 120 to 140 (LLPV…SIFN), 148 to 168 (AVAC…PVGF), 199 to 219 (LAML…IFIT), 242 to 262 (IANI…ATFA), 267 to 287 (TSST…CGIF), 302 to 322 (LMAM…VINA), 343 to 363 (IAAL…GSSF), 378 to 398 (LSFG…AALG), and 428 to 448 (VVPT…IAAM).

It localises to the cell membrane. This is an uncharacterized protein from Haemophilus influenzae (strain ATCC 51907 / DSM 11121 / KW20 / Rd).